Reading from the N-terminus, the 3033-residue chain is MSTNPKPQRKTKRNTNRRPQDVKFPGGGQIVGGVYLLPRRGPRLGVRATRKTSERSQPRGRRQPIPKDRRSTGKSWGKPGYPWPLYGNEGLGWAGWLLSPRGSRPSWGPNDPRHRSRNVGKVIDTLTCGFADLMGYIPVVGAPLGGVARALAHGVRVLEDGVNFATGNLPGCSFSIFLLALLSCITTPVSAAEVKNISTGYMVTNDCTNDSITWQLQAAVLHVPGCVPCEKVGNTSRCWIPVSPNVAVQQPGALTQGLRTHIDMVVMSATLCSALYVGDLCGGVMLAAQMFIVSPQHHWFVQDCNCSIYPGTITGHRMAWDMMMNWSPTATMILAYAMRVPEVIIDIIGGAHWGVMFGLAYFSMQGAWAKVVVILLLAAGVDAQTHTVGGSTAHNARTLTGMFSLGARQKIQLINTNGSWHINRTALNCNDSLHTGFLASLFYTHSFNSSGCPERMSACRSIEAFRVGWGALQYEDNVTNPEDMRPYCWHYPPRQCGVVSASSVCGPVYCFTPSPVVVGTTDRLGAPTYTWGENETDVFLLNSTRPPQGSWFGCTWMNSTGYTKTCGAPPCRIRADFNASMDLLCPTDCFRKHPDTTYIKCGSGPWLTPRCLIDYPYRLWHYPCTVNYTIFKIRMYVGGVEHRLTAACNFTRGDRCNLEDRDRSQLSPLLHSTTEWAILPCTYSDLPALSTGLLHLHQNIVDVQFMYGLSPALTKYIVRWEWVVLLFLLLADARVCACLWMLILLGQAEAALEKLVVLHAASAASCNGFLYFVIFFVAAWYIKGRVVPLATYSLTGLWSFGLLLLALPQQAYAYDASVHGQIGAALLVLITLFTLTPGYKTLLSRFLWWLCYLLTLAEAMVQEWAPPMQVRGGRDGIIWAVAIFCPGVVFDITKWLLAVLGPAYLLKGALTRVPYFVRAHALLRMCTMVRHLAGGRYVQMVLLALGRWTGTYIYDHLTPMSDWAANGLRDLAVAVEPIIFSPMEKKVIVWGAETAACGDILHGLPVSARLGREVLLGPADGYTSKGWSLLAPITAYAQQTRGLLGTIVVSMTGRDKTEQAGEIQVLSTVTQSFLGTTISGVLWTVYHGAGNKTLAGSRGPVTQMYSSAEGDLVGWPSPPGTKSLEPCTCGAVDLYLVTRNADVIPARRRGDKRGALLSPRPLSTLKGSSGGPVLCPRGHAVGVFRAAVCSRGVAKSIDFIPVETLDIVTRSPTFSDNSTPPAVPQTYQVGYLHAPTGSGKSTKVPVAYAAQGYKVLVLNPSVAATLGFGAYLSKAHGINPNIRTGVRTVTTGAPITYSTYGKFLADGGCAGGAYDIIICDECHAVDSTTILGIGTVLDQAETAGVRLTVLATATPPGSVTTPHPNIEEVALGQEGEIPFYGRAIPLSYIKGGRHLIFCHSKKKCDELAAALRGMGLNAVAYYRGLDVSVIPTQGDVVVVATDALMTGFTGDFDSVIDCNVAVTQVVDFSLDPTFTITTQTVPQDAVSRSQRRGRTGRGRLGIYRYVSTGERASGMFDSVVLCECYDAGAAWYELTPAETTVRLRAYFNTPGLPVCQDHLEFWEAVFTGLTHIDAHFLSQTKQSGENFAYLTAYQATVCARAKAPPPSWDVMWKCLTRLKPTLVGPTPLLYRLGSVTNEVTLTHPVTKYIATCMQADLEVMTSTWVLAGGVLAAVAAYCLATGCVCIIGRLHVNQRAVVAPDKEVLYEAFDEMEECASRAALIEEGQRIAEMLKSKIQGLLQQASKQAQDIQPAVQASWPKVEQFWAKHMWNFISGIQYLAGLSTLPGNPAVASMMAFSAALTSPLSTSTTILLNILGGWLASQIAPPAGATGFVVSGLVGAAVGSIGLGKVLVDILAGYGAGISGALVAFKIMSGEKPSMEDVVNLLPGILSPGALVVGVICAAILRRHVGPGEGAVQWMNRLIAFASRGNHVAPTHYVTESDASQRVTQLLGSLTITSLLRRLHNWITEDCPIPCSGSWLRDVWDWVCTILTDFKNWLTSKLFPKMPGLPFISCQKGYKGVWAGTGIMTTRCPCGANISGNVRLGSMRITGPKTCMNIWQGTFPINCYTEGQCVPKPAPNFKIAIWRVAASEYAEVTQHGSYHYITGLTTDNLKVPCQLPSPEFFSWVDGVQIHRFAPIPKPFFRDEVSFCVGLNSFVVGSQLPCDPEPDTDVLTSMLTDPSHITAETAARRLARGSPPSEASSSASQLSAPSLRATCTTHGKAYDVDMVDANLFMGGDVTRIESESKVVVLDSLDPMVEERSDLEPSIPSEYMLPKKRFPPALPAWARPDYNPPLVESWKRPDYQPATVAGCALPPPKKTPTPPPRRRRTVGLSESSIADALQQLAIKSFGQPPPSGDSGLSTGADAADSGSRTPPDELALSETGSISSMPPLEGEPGDPDLEPEQVELQPPPQGGVVTPGSGSGSWSTCSEEDDSVVCCSMSYSWTGALITPCSPEEEKLPINPLSNSLLRYHNKVYCTTSKSASLRAKKVTFDRMQALDAHYDSVLKDIKLAASKVTARLLTLEEACQLTPPHSARSKYGFGAKEVRSLSGRAVNHIKSVWKDLLEDTQTPIPTTIMAKNEVFCVDPTKGGKKAARLIVYPDLGVRVCEKMALYDITQKLPQAVMGASYGFQYSPAQRVEFLLKAWAEKKDPMGFSYDTRCFDSTVTERDIRTEESIYRACSLPEEAHTAIHSLTERLYVGGPMFNSKGQTCGYRRCRASGVLTTSMGNTITCYVKALAACKAAGIIAPTMLVCGDDLVVISESQGTEEDERNLRAFTEAMTRYSAPPGDPPRPEYDLELITSCSSNVSVALGPQGRRRYYLTRDPTTPIARAAWETVRHSPVNSWLGNIIQYAPTIWARMVLMTHFFSILMAQDTLDQNLNFEMYGAVYSVSPLDLPAIIERLHGLDAFSLHTYTPHELTRVASALRKLGAPPLRAWKSRARAVRASLISRGGRAAVCGRYLFNWAVKTKLKLTPLPEARLLDLSSWFTVGAGGGDIYHSVSRARPRLLLLGLLLLFVGVGLFLLPAR.

At Ser-2 the chain carries N-acetylserine; by host. Residues 2–23 (STNPKPQRKTKRNTNRRPQDVK) form an interaction with STAT1 region. Residues 2-58 (STNPKPQRKTKRNTNRRPQDVKFPGGGQIVGGVYLLPRRGPRLGVRATRKTSERSQP) form an interaction with EIF2AK2/PKR region. The tract at residues 2 to 59 (STNPKPQRKTKRNTNRRPQDVKFPGGGQIVGGVYLLPRRGPRLGVRATRKTSERSQPR) is interaction with DDX3X. Residues 2–75 (STNPKPQRKT…PKDRRSTGKS (74 aa)) form a disordered region. Over 2–168 (STNPKPQRKT…EDGVNFATGN (167 aa)) the chain is Cytoplasmic. Short sequence motifs (nuclear localization signal) lie at residues 5 to 13 (PKPQRKTKR) and 38 to 43 (PRRGPR). The span at 7 to 16 (PQRKTKRNTN) shows a compositional bias: basic residues. Residues 32–47 (GGVYLLPRRGPRLGVR) are compositionally biased toward low complexity. A Phosphoserine; by host modification is found at Ser-53. 2 short sequence motifs (nuclear localization signal) span residues 58–64 (PRGRRQP) and 66–71 (PKDRRS). Ser-99 bears the Phosphoserine; by host mark. The segment at 112–152 (PRHRSRNVGKVIDTLTCGFADLMGYIPVVGAPLGGVARALA) is important for endoplasmic reticulum and mitochondrial localization. Ser-116 carries the post-translational modification Phosphoserine; by host PKA. Positions 122–173 (VIDTLTCGFADLMGYIPVVGAPLGGVARALAHGVRVLEDGVNFATGNLPGCS) are interaction with APOA2. Residues 164 to 167 (FATG) form an important for lipid droplets localization region. The chain crosses the membrane as a helical span at residues 169-189 (LPGCSFSIFLLALLSCITTPV). The propeptide at 178–191 (LLALLSCITTPVSA) is ER anchor for the core protein, removed in mature form by host signal peptidase. Over 190–358 (SAAEVKNIST…GGAHWGVMFG (169 aa)) the chain is Lumenal. N-linked (GlcNAc...) asparagine; by host glycans are attached at residues Asn-196, Asn-209, and Asn-234. Residues 265-296 (VVMSATLCSALYVGDLCGGVMLAAQMFIVSPQ) are important for fusion. A glycan (N-linked (GlcNAc...) asparagine; by host) is linked at Asn-305. Residues 359 to 379 (LAYFSMQGAWAKVVVILLLAA) traverse the membrane as a helical segment. Over 380 to 729 (GVDAQTHTVG…WEWVVLLFLL (350 aa)) the chain is Lumenal. The interval 385 to 411 (THTVGGSTAHNARTLTGMFSLGARQKI) is HVR1. 4 N-linked (GlcNAc...) (high mannose) asparagine; by host glycosylation sites follow: Asn-417, Asn-423, Asn-430, and Asn-448. 4 disulfides stabilise this stretch: Cys-429/Cys-554, Cys-452/Cys-459, Cys-488/Cys-496, and Cys-505/Cys-510. The N-linked (GlcNAc...) (high mannose) asparagine; by host glycan is linked to Asn-477. The interval 484–496 (MRPYCWHYPPRQC) is CD81-binding 1. A CD81-binding 2 region spans residues 524–555 (LGAPTYTWGENETDVFLLNSTRPPQGSWFGCT). Residues Asn-534, Asn-542, and Asn-558 are each glycosylated (N-linked (GlcNAc...) (high mannose) asparagine; by host). A disulfide bridge links Cys-566 with Cys-571. Residue Asn-578 is glycosylated (N-linked (GlcNAc...) (high mannose) asparagine; by host). Disulfide bonds link Cys-585/Cys-589, Cys-601/Cys-624, and Cys-611/Cys-648. N-linked (GlcNAc...) (high mannose) asparagine; by host glycosylation is found at Asn-627 and Asn-649. Cys-656 and Cys-681 are disulfide-bonded. The EIF2AK2/eIF2-alpha phosphorylation homology domain (PePHD) stretch occupies residues 664–675 (SQLSPLLHSTTE). Residues 730-750 (LADARVCACLWMLILLGQAEA) form a helical membrane-spanning segment. The Lumenal portion of the chain corresponds to 751-761 (ALEKLVVLHAA). Residues 762–782 (SAASCNGFLYFVIFFVAAWYI) form a helical membrane-spanning segment. Residues 783–786 (KGRV) lie on the Cytoplasmic side of the membrane. Residues 787–807 (VPLATYSLTGLWSFGLLLLAL) form a helical membrane-spanning segment. Residues 808–817 (PQQAYAYDAS) lie on the Lumenal side of the membrane. Residues 818–838 (VHGQIGAALLVLITLFTLTPG) form a helical membrane-spanning segment. At 839-885 (YKTLLSRFLWWLCYLLTLAEAMVQEWAPPMQVRGGRDGIIWAVAIFC) the chain is on the cytoplasmic side. The helical transmembrane segment at 886 to 906 (PGVVFDITKWLLAVLGPAYLL) threads the bilayer. Residues 907–932 (KGALTRVPYFVRAHALLRMCTMVRHL) lie on the Lumenal side of the membrane. In terms of domain architecture, Peptidase C18 spans 907–1030 (KGALTRVPYF…GYTSKGWSLL (124 aa)). A protease NS2-3 region spans residues 908–1210 (GALTRVPYFV…PVETLDIVTR (303 aa)). Cys-926 carries the S-palmitoyl cysteine; by host lipid modification. The helical transmembrane segment at 933-953 (AGGRYVQMVLLALGRWTGTYI) threads the bilayer. Residues 933–953 (AGGRYVQMVLLALGRWTGTYI) are interaction with host SCPS1. Topologically, residues 954–1661 (YDHLTPMSDW…CMQADLEVMT (708 aa)) are cytoplasmic. Active-site for protease NS2 activity; shared with dimeric partner residues include His-956, Glu-976, and Cys-997. A Peptidase S29 domain is found at 1031 to 1212 (APITAYAQQT…ETLDIVTRSP (182 aa)). Residues His-1087 and Asp-1111 each act as charge relay system; for serine protease NS3 activity in the active site. Zn(2+) is bound by residues Cys-1127 and Cys-1129. The Charge relay system; for serine protease NS3 activity role is filled by Ser-1169. The Zn(2+) site is built by Cys-1175 and His-1179. The Helicase ATP-binding domain maps to 1221-1373 (PAVPQTYQVG…PNIEEVALGQ (153 aa)). 1234–1241 (APTGSGKS) provides a ligand contact to ATP. Mg(2+) is bound by residues Ser-1241 and Glu-1321. The DECH box signature appears at 1320 to 1323 (DECH). The tract at residues 1490–1501 (QRRGRTGRGRLG) is RNA-binding. Residues 1662–1682 (STWVLAGGVLAAVAAYCLATG) traverse the membrane as a helical segment. Residues 1683–1694 (CVCIIGRLHVNQ) form an NS3-binding region. Residues 1683 to 1809 (CVCIIGRLHV…ALTSPLSTST (127 aa)) are Cytoplasmic-facing. The chain crosses the membrane as a helical span at residues 1810–1830 (TILLNILGGWLASQIAPPAGA). At 1831 to 1832 (TG) the chain is on the lumenal side. The chain crosses the membrane as a helical span at residues 1833–1853 (FVVSGLVGAAVGSIGLGKVLV). The interval 1837–1865 (GLVGAAVGSIGLGKVLVDILAGYGAGISG) is glycine zipper. A topological domain (cytoplasmic) is located at residue Asp-1854. The chain crosses the membrane as a helical span at residues 1855-1875 (ILAGYGAGISGALVAFKIMSG). The Lumenal segment spans residues 1876–1885 (EKPSMEDVVN). Residues 1886–1906 (LLPGILSPGALVVGVICAAIL) traverse the membrane as a helical segment. Residues 1907-1976 (RRHVGPGEGA…WITEDCPIPC (70 aa)) lie on the Cytoplasmic side of the membrane. The S-palmitoyl cysteine; by host moiety is linked to residue Cys-1972. A lipid anchor (S-palmitoyl cysteine; by host; partial) is attached at Cys-1976. The stretch at 1977 to 2007 (SGSWLRDVWDWVCTILTDFKNWLTSKLFPKM) is an intramembrane region. The segment at 1982–2002 (RDVWDWVCTILTDFKNWLTSK) is membrane-binding. At 2008 to 3012 (PGLPFISCQK…YHSVSRARPR (1005 aa)) the chain is on the cytoplasmic side. The interval 2009 to 2225 (GLPFISCQKG…RATCTTHGKA (217 aa)) is RNA-binding. Zn(2+) contacts are provided by Cys-2015, Cys-2033, Cys-2035, and Cys-2056. Tyr-2069 is modified (phosphotyrosine; by host). Residues 2124-2212 (EFFSWVDGVQ…ASSSASQLSA (89 aa)) form an FKBP8-binding region. The segment at 2124–2332 (EFFSWVDGVQ…PTPPPRRRRT (209 aa)) is transcriptional activation. Positions 2139–2143 (PIPKP) are interaction with non-structural protein 4A. Disordered regions lie at residues 2193-2214 (RLAR…SAPS) and 2309-2335 (ATVA…TVGL). Ser-2198 carries the post-translational modification Phosphoserine; by host; in p56. The span at 2198–2214 (SPPSEASSSASQLSAPS) shows a compositional bias: low complexity. Phosphoserine; by host; in p58 is present on Ser-2201. Ser-2205 carries the post-translational modification Phosphoserine; by host; in p56 and p58, regulates intracellular NS5A distribution. Ser-2208, Ser-2211, and Ser-2214 each carry phosphoserine; by host; in p58. Residues 2210-2249 (LSAPSLRATCTTHGKAYDVDMVDANLFMGGDVTRIESESK) form an ISDR region. The interval 2214-2275 (SLRATCTTHG…LEPSIPSEYM (62 aa)) is interaction with EIF2AK2/PKR. Positions 2253 to 2310 (LDSLDPMVEERSDLEPSIPSEYMLPKKRFPPALPAWARPDYNPPLVESWKRPDYQPAT) are NS4B-binding. Pro residues predominate over residues 2316–2326 (LPPPKKTPTPP). An SH3-binding motif is present at residues 2322–2325 (TPTP). Thr-2324 is subject to Phosphothreonine; by host. The short motif at 2326 to 2334 (PPRRRRTVG) is the Nuclear localization signal element. Residues 2336–2447 (SESSIADALQ…SVVCCSMSYS (112 aa)) form an interaction with host IFI27 region. A Glycyl lysine isopeptide (Lys-Gly) (interchain with G-Cter in ubiquitin) cross-link involves residue Lys-2350. The interval 2351–2431 (SFGQPPPSGD…PGSGSGSWST (81 aa)) is disordered. Positions 2358-2381 (SGDSGLSTGADAADSGSRTPPDEL) are V3. Acidic residues predominate over residues 2398 to 2408 (EPGDPDLEPEQ). The span at 2417–2431 (GGVVTPGSGSGSWST) shows a compositional bias: low complexity. A RdRp catalytic domain is found at 2656 to 2774 (PMGFSYDTRC…ISESQGTEED (119 aa)). 3 residues coordinate Mg(2+): Asp-2662, Asp-2760, and Asp-2761. A helical membrane pass occupies residues 3013 to 3033 (LLLLGLLLLFVGVGLFLLPAR).

The protein belongs to the hepacivirus polyprotein family. In terms of assembly, homooligomer. Interacts with E1 (via C-terminus). Interacts with the non-structural protein 5A. Interacts (via N-terminus) with host STAT1 (via SH2 domain); this interaction results in decreased STAT1 phosphorylation and ubiquitin-mediated proteasome-dependent STAT1 degradation, leading to decreased IFN-stimulated gene transcription. Interacts with host STAT3; this interaction constitutively activates STAT3. Interacts with host LTBR receptor. Interacts with host TNFRSF1A receptor and possibly induces apoptosis. Interacts with host HNRPK. Interacts with host YWHAE. Interacts with host UBE3A/E6AP. Interacts with host DDX3X. Interacts with host APOA2. Interacts with host RXRA protein. Interacts with host SP110 isoform 3/Sp110b; this interaction sequesters the transcriptional corepressor SP110 away from the nucleus. Interacts with host CREB3 nuclear transcription protein; this interaction triggers cell transformation. Interacts with host ACY3. Interacts with host C1QR1. Interacts with host RBM24; this interaction, which enhances the interaction of the mature core protein with 5'-UTR, may inhibit viral translation and favor replication. Interacts with host EIF2AK2/PKR; this interaction induces the autophosphorylation of EIF2AK2. Part of the viral assembly initiation complex composed of NS2, E1, E2, NS3, NS4A, NS5A and the mature core protein. As to quaternary structure, forms a heterodimer with envelope glycoprotein E2. Interacts with mature core protein. Interacts with protease NS2. The heterodimer E1/E2 interacts with host CLDN1; this interaction plays a role in viral entry into host cell. Interacts with host SPSB2 (via C-terminus). Part of the viral assembly initiation complex composed of NS2, E1, E2, NS3, NS4A, NS5A and the mature core protein. Interacts with host NEURL3; this interaction prevents E1 binding to glycoprotein E2. Forms a heterodimer with envelope glycoprotein E1. Interacts with host CD81 and SCARB1 receptors; this interaction may play a role in viral entry into host cell. Interacts with host EIF2AK2/PKR; this interaction inhibits EIF2AK2 and probably allows the virus to evade the innate immune response. Interacts with host CD209/DC-SIGN and CLEC4M/DC-SIGNR. Interact with host SPCS1; this interaction is essential for viral particle assembly. Interacts with protease NS2. The heterodimer E1/E2 interacts with host CLDN1; this interaction plays a role in viral entry into host cell. Part of the viral assembly initiation complex composed of NS2, E1, E2, NS3, NS4A, NS5A and the mature core protein. Interacts with host SLC3A2/4F2hc; the interaction may facilitate viral entry into host cell. Interacts with human PLSCR1. In terms of assembly, homohexamer. Homoheptamer. Interacts with protease NS2. As to quaternary structure, homodimer. Interacts with host SPCS1; this interaction is essential for viral particle assembly. Interacts with envelope glycoprotein E1. Interacts with envelope glycoprotein E2. Interacts with viroporin p7. Interacts with serine protease/helicase NS3. Part of the replication complex composed of NS2, NS3, NS4A, NS4B, NS5A and the RNA-directed RNA polymerase embedded in an ER-derived membranous web. Part of the viral assembly initiation complex composed of NS2, E1, E2, NS3, NS4A, NS5A and the mature core protein. Interacts with protease NS2. Interacts with non-structural protein 4A; this interaction stabilizes the folding of NS3 serine protease. NS3-NS4A interaction is essential for NS3 activation and allows membrane anchorage of the latter. NS3/NS4A complex also prevents phosphorylation of host IRF3, thus preventing the establishment of dsRNA induced antiviral state. Interacts with host MAVS; this interaction leads to the cleavage and inhibition of host MAVS. Interacts with host TICAM1; this interaction leads to the cleavage and inhibition of host TICAM1. Interacts with host TANK-binding kinase/TBK1; this interaction results in the inhibition of the association between TBK1 and IRF3, which leads to the inhibition of IRF3 activation. Interacts with host RBM24. Part of the replication complex composed of NS2, NS3, NS4A, NS4B, NS5A and the RNA-directed RNA polymerase embedded in an ER-derived membranous web. Part of the viral assembly initiation complex composed of NS2, E1, E2, NS3, NS4A, NS5A and the mature core protein. In terms of assembly, interacts with NS3 serine protease; this interaction stabilizes the folding of NS3 serine protease. NS3-NS4A interaction is essential for NS3 activation and allows membrane anchorage of the latter. Interacts with non-structural protein 5A (via N-terminus). Part of the replication complex composed of NS2, NS3, NS4A, NS4B, NS5A and the RNA-directed RNA polymerase embedded in an ER-derived membranous web. Part of the viral assembly initiation complex composed of NS2, E1, E2, NS3, NS4A, NS5A and the mature core protein. As to quaternary structure, homomultimer. Interacts with non-structural protein NS5A. Interacts with host PLA2G4C; this interaction likely initiates the recruitment of replication complexes to lipid droplets. Interacts with host STING; this interaction disrupts the interaction between STING and TBK1 thereby suppressing the interferon signaling. Part of the replication complex composed of NS2, NS3, NS4A, NS4B, NS5A and the RNA-directed RNA polymerase embedded in an ER-derived membranous web. Monomer. Homodimer; dimerization is required for RNA-binding. Interacts with the mature core protein. Interacts (via N-terminus) with non-structural protein 4A. Interacts with non-structural protein 4B. Interacts (via region D2) with RNA-directed RNA polymerase. Part of the viral assembly initiation complex composed of NS2, E1, E2, NS3, NS4A, NS5A and the mature core protein. Part of the replication complex composed of NS2, NS3, NS4A, NS4B, NS5A and the RNA-directed RNA polymerase embedded in an ER-derived membranous web. Interacts with host GRB2. Interacts with host BIN1. Interacts with host PIK3R1. Interacts with host SRCAP. Interacts with host FKBP8. Interacts (via C-terminus) with host VAPB (via MSP domain). Interacts with host EIF2AK2/PKR; this interaction leads to disruption of EIF2AK2 dimerization by NS5A and probably allows the virus to evade the innate immune response. Interacts (via N-terminus) with host PACSIN2 (via N-terminus); this interaction attenuates protein kinase C alpha-mediated phosphorylation of PACSIN2 by disrupting the interaction between PACSIN2 and PRKCA. Interacts (via N-terminus) with host SRC kinase (via SH2 domain). Interacts with most Src-family kinases. Interacts with host IFI27 and SKP2; promotes the ubiquitin-mediated proteasomal degradation of NS5A. Interacts with host GPS2. Interacts with host TNFRSF21; this interaction allows the modulation by the virus of JNK, p38 MAPK, STAT3, and Akt signaling pathways in a DR6-dependent manner. Interacts (via N-terminus) with host CIDEB (via N-terminus); this interaction seems to regulate the association of HCV particles with APOE. Interacts with host CHKA/Choline Kinase-alpha; CHKA bridges host PI4KA and NS5A and potentiates NS5A-stimulated PI4KA activity, which then facilitates the targeting of the ternary complex to the ER for viral replication. Interacts with host SPSB2 (via C-terminus); this interaction targets NS5A for ubiquitination and degradation. Interacts with host RAB18; this interaction may promote the association of NS5A and other replicase components with lipid droplets. Interacts (via region D2) with host PPIA/CYPA; the interaction stimulates RNA-binding ability of NS5A and is dependent on the peptidyl-prolyl cis-trans isomerase activity of PPIA/CYPA. Interacts with host TRIM14; this interaction induces the degradation of NS5A. In terms of assembly, homooligomer. Interacts with non-structural protein 5A. Interacts with host VAPB. Interacts with host PRK2/PKN2. Interacts with host HNRNPA1 and SEPT6; these interactions facilitate viral replication. Part of the replication complex composed of NS2, NS3, NS4A, NS4B, NS5A and the RNA-directed RNA polymerase. It depends on Zn(2+) as a cofactor. Mg(2+) is required as a cofactor. Specific enzymatic cleavages in vivo yield mature proteins. The structural proteins, core, E1, E2 and p7 are produced by proteolytic processing by host signal peptidases. The core protein precursor is synthesized as a 23 kDa, which is retained in the ER membrane through the hydrophobic signal peptide. Cleavage by the signal peptidase releases the 21 kDa mature core protein. The cleavage of the core protein precursor occurs between aminoacids 176 and 188 but the exact cleavage site is not known. Some degraded forms of the core protein appear as well during the course of infection. The other proteins (p7, NS2, NS3, NS4A, NS4B, NS5A and NS5B) are cleaved by the viral proteases. Autoprocessing between NS2 and NS3 is mediated by the NS2 cysteine protease catalytic domain and regulated by the NS3 N-terminal domain. In terms of processing, phosphorylated by host PKC and PKA. Post-translationally, ubiquitinated; mediated by UBE3A and leading to core protein subsequent proteasomal degradation. Highly N-glycosylated. In terms of processing, palmitoylation is required for NS2/3 autoprocessing and E2 recruitment to membranes. Post-translationally, palmitoylated. This modification may play a role in its polymerization or in protein-protein interactions. Phosphorylated on serines in a basal form termed p56. p58 is a hyperphosphorylated form of p56. p56 and p58 coexist in the cell in roughly equivalent amounts. Hyperphosphorylation is dependent on the presence of NS4A. Host CSNK1A1/CKI-alpha or RPS6KB1 kinases may be responsible for NS5A phosphorylation. In terms of processing, tyrosine phosphorylation is essential for the interaction with host SRC. Post-translationally, the N-terminus is phosphorylated by host PRK2/PKN2.

It is found in the host endoplasmic reticulum membrane. Its subcellular location is the host mitochondrion membrane. The protein localises to the virion. The protein resides in the host cytoplasm. It localises to the host nucleus. It is found in the host lipid droplet. Its subcellular location is the virion membrane. The protein localises to the host mitochondrion. The protein resides in the host cell membrane. It localises to the host perinuclear region. It carries out the reaction Hydrolysis of four peptide bonds in the viral precursor polyprotein, commonly with Asp or Glu in the P6 position, Cys or Thr in P1 and Ser or Ala in P1'.. The enzyme catalyses a ribonucleoside 5'-triphosphate + H2O = a ribonucleoside 5'-diphosphate + phosphate + H(+). The catalysed reaction is ATP + H2O = ADP + phosphate + H(+). It catalyses the reaction RNA(n) + a ribonucleoside 5'-triphosphate = RNA(n+1) + diphosphate. Inhibited by the antiviral drug hexamethylene amiloride. Inhibition by amantadine appears to be genotype-dependent. Also inhibited by long-alkyl-chain iminosugar derivatives. With respect to regulation, activity is up-regulated by PRK2/PKN2-mediated phosphorylation. In terms of biological role, packages viral RNA to form a viral nucleocapsid, and promotes virion budding. Participates in the viral particle production as a result of its interaction with the non-structural protein 5A. Binds RNA and may function as a RNA chaperone to induce the RNA structural rearrangements taking place during virus replication. Modulates viral translation initiation by interacting with viral IRES and 40S ribosomal subunit. Affects various cell signaling pathways, host immunity and lipid metabolism. Prevents the establishment of cellular antiviral state by blocking the interferon-alpha/beta (IFN-alpha/beta) and IFN-gamma signaling pathways and by blocking the formation of phosphorylated STAT1 and promoting ubiquitin-mediated proteasome-dependent degradation of STAT1. Activates STAT3 leading to cellular transformation. Regulates the activity of cellular genes, including c-myc and c-fos. May repress the promoter of p53, and sequester CREB3 and SP110 isoform 3/Sp110b in the cytoplasm. Represses cell cycle negative regulating factor CDKN1A, thereby interrupting an important check point of normal cell cycle regulation. Targets transcription factors involved in the regulation of inflammatory responses and in the immune response: suppresses TNF-induced NF-kappa-B activation, and activates AP-1. Binds to dendritic cells (DCs) via C1QR1, resulting in down-regulation of T-lymphocytes proliferation. Alters lipid metabolism by interacting with hepatocellular proteins involved in lipid accumulation and storage. Induces up-regulation of FAS promoter activity, and thereby contributes to the increased triglyceride accumulation in hepatocytes (steatosis). Functionally, forms a heterodimer with envelope glycoprotein E2, which mediates virus attachment to the host cell, virion internalization through clathrin-dependent endocytosis and fusion with host membrane. Fusion with the host cell is most likely mediated by both E1 and E2, through conformational rearrangements of the heterodimer required for fusion rather than a classical class II fusion mechanism. E1/E2 heterodimer binds host apolipoproteins such as APOB and APOE thereby forming a lipo-viro-particle (LVP). APOE associated to the LVP allows the initial virus attachment to cell surface receptors such as the heparan sulfate proteoglycans (HSPGs), syndecan-1 (SDC1), syndecan-1 (SDC2), the low-density lipoprotein receptor (LDLR) and scavenger receptor class B type I (SCARB1). The cholesterol transfer activity of SCARB1 allows E2 exposure and binding of E2 to SCARB1 and the tetraspanin CD81. E1/E2 heterodimer binding on CD81 activates the epithelial growth factor receptor (EGFR) signaling pathway. Diffusion of the complex E1-E2-EGFR-SCARB1-CD81 to the cell lateral membrane allows further interaction with Claudin 1 (CLDN1) and occludin (OCLN) to finally trigger HCV entry. Its function is as follows. Forms a heterodimer with envelope glycoprotein E1, which mediates virus attachment to the host cell, virion internalization through clathrin-dependent endocytosis and fusion with host membrane. Fusion with the host cell is most likely mediated by both E1 and E2, through conformational rearrangements of the heterodimer required for fusion rather than a classical class II fusion mechanism. The interaction between envelope glycoprotein E2 and host apolipoprotein E/APOE allows the proper assembly, maturation and infectivity of the viral particles. This interaction is probably promoted via the up-regulation of cellular autophagy by the virus. E1/E2 heterodimer binds host apolipoproteins such as APOB and APOE thereby forming a lipo-viro-particle (LVP). APOE associated to the LVP allows the initial virus attachment to cell surface receptors such as the heparan sulfate proteoglycans (HSPGs), syndecan-1 (SDC1), syndecan-1 (SDC2), the low-density lipoprotein receptor (LDLR) and scavenger receptor class B type I (SCARB1). The cholesterol transfer activity of SCARB1 allows E2 exposure and binding of E2 to SCARB1 and the tetraspanin CD81. E1/E2 heterodimer binding on CD81 activates the epithelial growth factor receptor (EGFR) signaling pathway. Diffusion of the complex E1-E2-EGFR-SCARB1-CD81 to the cell lateral membrane allows further interaction with Claudin 1 (CLDN1) and occludin (OCLN) to finally trigger HCV entry. Inhibits host EIF2AK2/PKR activation, preventing the establishment of an antiviral state. Viral ligand for CD209/DC-SIGN and CLEC4M/DC-SIGNR, which are respectively found on dendritic cells (DCs), and on liver sinusoidal endothelial cells and macrophage-like cells of lymph node sinuses. These interactions allow the capture of circulating HCV particles by these cells and subsequent facilitated transmission to permissive cells such as hepatocytes and lymphocyte subpopulations. The interaction between E2 and host amino acid transporter complex formed by SLC3A2 and SLC7A5/LAT1 may facilitate viral entry into host cell. Ion channel protein that acts as a viroporin and plays an essential role in the assembly, envelopment and secretion of viral particles. Regulates the host cell secretory pathway, which induces the intracellular retention of viral glycoproteins and favors assembly of viral particles. Creates a pore in acidic organelles and releases Ca(2+) and H(+) in the cytoplasm of infected cells, leading to a productive viral infection. High levels of cytoplasmic Ca(2+) may trigger membrane trafficking and transport of viral ER-associated proteins to viroplasms, sites of viral genome replication. This ionic imbalance induces the assembly of the inflammasome complex, which triggers the maturation of pro-IL-1beta into IL-1beta through the action of caspase-1. Targets also host mitochondria and induces mitochondrial depolarization. In addition of its role as a viroporin, acts as a lipid raft adhesion factor. In terms of biological role, cysteine protease required for the proteolytic auto-cleavage between the non-structural proteins NS2 and NS3. The N-terminus of NS3 is required for the function of NS2 protease (active region NS2-3). Promotes the initiation of viral particle assembly by mediating the interaction between structural and non-structural proteins. Functionally, displays three enzymatic activities: serine protease with a chymotrypsin-like fold, NTPase and RNA helicase. NS3 serine protease, in association with NS4A, is responsible for the cleavages of NS3-NS4A, NS4A-NS4B, NS4B-NS5A and NS5A-NS5B. The NS3/NS4A complex prevents phosphorylation of host IRF3, thus preventing the establishment of dsRNA induced antiviral state. The NS3/NS4A complex induces host amino acid transporter component SLC3A2, thus contributing to HCV propagation. NS3 RNA helicase binds to RNA and unwinds both dsDNA and dsRNA in the 3' to 5' direction, and likely resolves RNA complicated stable secondary structures in the template strand. Binds a single ATP and catalyzes the unzipping of a single base pair of dsRNA. Inhibits host antiviral proteins TBK1 and IRF3 thereby preventing the establishment of an antiviral state. Cleaves host MAVS/CARDIF thereby preventing the establishment of an antiviral state. Cleaves host TICAM1/TRIF, thereby disrupting TLR3 signaling and preventing the establishment of an antiviral state. Its function is as follows. Induces a specific membrane alteration that serves as a scaffold for the virus replication complex. This membrane alteration gives rise to the so-called ER-derived membranous web that contains the replication complex. NS4B self-interaction contributes to its function in membranous web formation. Promotes host TRIF protein degradation in a CASP8-dependent manner thereby inhibiting host TLR3-mediated interferon signaling. Disrupts the interaction between STING and TBK1 contributing to the inhibition of interferon signaling. Phosphorylated protein that is indispensable for viral replication and assembly. Both hypo- and hyperphosphorylated states are required for the viral life cycle. The hyperphosphorylated form of NS5A is an inhibitor of viral replication. Involved in RNA-binding and especially in binding to the viral genome. Zinc is essential for RNA-binding. Participates in the viral particle production as a result of its interaction with the mature viral core protein. Its interaction with host VAPB may target the viral replication complex to vesicles. Down-regulates viral IRES translation initiation. Mediates interferon resistance, presumably by interacting with and inhibiting host EIF2AK2/PKR. Prevents BIN1-induced apoptosis. Acts as a transcriptional activator of some host genes important for viral replication when localized in the nucleus. Via the interaction with host PACSIN2, modulates lipid droplet formation in order to promote virion assembly. Modulates TNFRSF21/DR6 signaling pathway for viral propagation. In terms of biological role, RNA-dependent RNA polymerase that performs primer-template recognition and RNA synthesis during viral replication. Initiates RNA transcription/replication at a flavin adenine dinucleotide (FAD), resulting in a 5'- FAD cap on viral RNAs. In this way, recognition of viral 5' RNA by host pattern recognition receptors can be bypassed, thereby evading activation of antiviral pathways. This is Genome polyprotein from Homo sapiens (Human).